The chain runs to 315 residues: Rhomboid-related protein 4 (315 aa).

At 1–21 (MQRRSRGINTGLILLLSQIFH) the chain is on the cytoplasmic side. Residues 22-42 (VGINNIPPVTLATLALNIWFF) form a helical membrane-spanning segment. Residues 43 to 106 (LNPQKPLYSS…RRLGSRWFAY (64 aa)) are Extracellular-facing. The helical transmembrane segment at 107-127 (VITAFSVLTGVVYLLLQFAVA) threads the bilayer. Over 128–138 (EFMDEPDFKRS) the chain is Cytoplasmic. A helical transmembrane segment spans residues 139–157 (CAVGFSGVLFALKVLNNHY). The active-site Nucleophile is serine 144. The Extracellular segment spans residues 158–180 (CPGGFVNILGFPVPNRFACWVEL). A helical membrane pass occupies residues 181 to 201 (VAIHLFSPGTSFAGHLAGILV). The active site involves histidine 195. Over 202–315 (GLMYTQGPLK…RQRLHRFDSQ (114 aa)) the chain is Cytoplasmic. The segment at 269–284 (SEEEQLERALQASLWD) is ubiquitin-binding domain (UBD). The segment at 283–315 (WDRGNTRNSPPPYGFHLSPEEMRRQRLHRFDSQ) is disordered. The segment covering 300 to 315 (SPEEMRRQRLHRFDSQ) has biased composition (basic and acidic residues). The interval 301–315 (PEEMRRQRLHRFDSQ) is VCP/p97-interacting motif (VIM).

This sequence belongs to the peptidase S54 family. In terms of assembly, interacts (via C-terminal domain) with VCP. Interacts with ubiquitin and ubiquitinated proteins. Interacts with BIK and STEAP3. Expressed strongly in testis.

It localises to the endoplasmic reticulum membrane. The protein resides in the mitochondrion membrane. The catalysed reaction is Cleaves type-1 transmembrane domains using a catalytic dyad composed of serine and histidine that are contributed by different transmembrane domains.. Inhibited by aprotinin. Intramembrane-cleaving serine protease that cleaves single transmembrane or multi-pass membrane proteins in the hydrophobic plane of the membrane, luminal loops and juxtamembrane regions. Involved in regulated intramembrane proteolysis and the subsequent release of functional polypeptides from their membrane anchors. Functional component of endoplasmic reticulum-associated degradation (ERAD) for misfolded membrane proteins. Required for the degradation process of some specific misfolded endoplasmic reticulum (ER) luminal proteins. Participates in the transfer of misfolded proteins from the ER to the cytosol, where they are destroyed by the proteasome in a ubiquitin-dependent manner. Functions in BIK, MPZ, PKD1, PTCRA, RHO, STEAP3 and TRAC processing. Involved in the regulation of exosomal secretion; inhibits the TSAP6-mediated secretion pathway. Involved in the regulation of apoptosis; modulates BIK-mediated apoptotic activity. Also plays a role in the regulation of spermatogenesis; inhibits apoptotic activity in spermatogonia. The chain is Rhomboid-related protein 4 (RHBDD1) from Homo sapiens (Human).